The chain runs to 118 residues: Large ribosomal subunit protein bL20 (118 aa).

It belongs to the bacterial ribosomal protein bL20 family.

Its function is as follows. Binds directly to 23S ribosomal RNA and is necessary for the in vitro assembly process of the 50S ribosomal subunit. It is not involved in the protein synthesizing functions of that subunit. The protein is Large ribosomal subunit protein bL20 of Syntrophotalea carbinolica (strain DSM 2380 / NBRC 103641 / GraBd1) (Pelobacter carbinolicus).